The primary structure comprises 76 residues: FMRFamide-related neuropeptides (76 aa).

The N-terminal stretch at 1 to 27 (MCVQTRMLVAVAVVLVVLAVLSDPVSA) is a signal peptide. The residue at position 39 (phenylalanine 39) is a Phenylalanine amide.

Belongs to the FARP (FMRFamide related peptide) family. Olfactory lobe and accessory lobe, olfactory globular tract, olfactory lobe cells (at protein level). Widely distributed throughout nervous system.

The protein localises to the secreted. Functionally, GYRKPPFNGSIF-amide may be involved in olfaction and contraction of hindgut. The polypeptide is FMRFamide-related neuropeptides (Procambarus clarkii (Red swamp crayfish)).